The chain runs to 532 residues: Tyrosine-protein kinase Src-1 (532 aa).

The disordered stretch occupies residues 1–52; sequence MGATKSKPREGGPRSRSLDIVEGSHQPFTSLSASQTPNKSLDSHRPPAQPFG. A lipid anchor (N-myristoyl glycine) is attached at G2. Over residues 7–19 the composition is skewed to basic and acidic residues; sequence KPREGGPRSRSLD. Residues 26–40 are compositionally biased toward polar residues; that stretch reads QPFTSLSASQTPNKS. Residues 80–141 form the SH3 domain; the sequence is GGVTTFVALY…PSNYVAPSDS (62 aa). Positions 147–244 constitute an SH2 domain; sequence WYLGKITRRE…GLCHRLTTVC (98 aa). Residues 266-519 form the Protein kinase domain; it reads LRLELKLGQG…YLQAFLEDYF (254 aa). ATP is bound by residues 272 to 280 and K294; that span reads LGQGCFGEV. D385 functions as the Proton acceptor in the catalytic mechanism. Residue Y415 is modified to Phosphotyrosine; by autocatalysis.

Belongs to the protein kinase superfamily. Tyr protein kinase family. SRC subfamily.

Its subcellular location is the cell membrane. The catalysed reaction is L-tyrosyl-[protein] + ATP = O-phospho-L-tyrosyl-[protein] + ADP + H(+). The sequence is that of Tyrosine-protein kinase Src-1 (src-a) from Xenopus laevis (African clawed frog).